The following is a 303-amino-acid chain: Movement protein (303 aa).

Positions 272-302 (PPKRDFELTETSKLKSMISDLTQKVVNLDKK) form a coiled coil.

It belongs to the caulimoviridae movement protein family. Homotrimer, through the coiled-coil domain. Interacts with VAP.

Its subcellular location is the host cell junction. The protein localises to the host plasmodesma. Transports viral genome to neighboring plant cells directly through plasmosdesmata, without any budding. The movement protein allows efficient cell to cell propagation, by bypassing the host cell wall barrier. Acts by forming tubules structures that increase the size exclusion limit (SEL) of plasmodesmata, thereby allowing viral ribonucleocapsids to spread directly to neighboring cells. This Soybean chlorotic mottle virus protein is Movement protein.